A 360-amino-acid chain; its full sequence is uncharacterized protein (360 aa).

It to P.multocida PM1082.

This is an uncharacterized protein from Pasteurella multocida (strain Pm70).